A 377-amino-acid polypeptide reads, in one-letter code: MAHPMATHPRLQRRHGARSGSSRCRHRRPVPRRRSRSRPRWRAARAHRRHHRRSGPGIGDHPADRARHRRGGRLPAQPRRAAARRPDPRGGANTDHHAAPRHRRAAAGTSHRRRDRLASNDSQHHAHPTATGPRPRTTVRRRRQPRITHPVGTADHRTRTALRRPRPADQLSAALRSALEETRRLSGLADQLLTLARADRPESHPSAKAVPITPLLHESVARFAATGADITTRAEPDLFVSIDPDHLRRILTAVLDNAITHGDGEIAVTAHARDGAVDIGVRDHGPGFADHFLPVAFDRFTRADTARGGRGSGLGLAIVAALTTTHGGHANATNHPDGGAELRITLPTPRPPFHEELPRITSSDTKDPNREHDTSDQ.

2 disordered regions span residues 1–169 (MAHP…RPAD) and 346–377 (LPTPRPPFHEELPRITSSDTKDPNREHDTSDQ). The segment covering 10–54 (RLQRRHGARSGSSRCRHRRPVPRRRSRSRPRWRAARAHRRHHRRS) has biased composition (basic residues). A compositionally biased stretch (basic and acidic residues) spans 84–98 (RRPDPRGGANTDHHA). Composition is skewed to basic residues over residues 99–115 (APRHRRAAAGTSHRRRD) and 137–146 (TTVRRRRQPR). In terms of domain architecture, Histidine kinase spans 146 to 350 (RITHPVGTAD…ELRITLPTPR (205 aa)). A Phosphohistidine; by autocatalysis modification is found at histidine 149. A compositionally biased stretch (basic and acidic residues) spans 352 to 377 (PFHEELPRITSSDTKDPNREHDTSDQ).

Autophosphorylated.

It carries out the reaction ATP + protein L-histidine = ADP + protein N-phospho-L-histidine.. In terms of biological role, member of the two-component system HK/TcrA. Phosphorylates TcrA. The protein is Probable sensor histidine kinase HK of Mycobacterium tuberculosis (strain CDC 1551 / Oshkosh).